The chain runs to 337 residues: Interferon gamma receptor 2 (337 aa).

Residues M1–A21 form the signal peptide. The Extracellular segment spans residues S28 to Q247. Residues P31–M129 enclose the Fibronectin type-III 1 domain. 2 N-linked (GlcNAc...) asparagine glycosylation sites follow: N56 and N85. A disulfide bridge links C86 with C94. N-linked (GlcNAc...) asparagine glycosylation is found at N110, N137, N219, and N231. The 99-residue stretch at P142–D240 folds into the Fibronectin type-III 2 domain. C209 and C234 form a disulfide bridge. Residues V248–F268 form a helical membrane-spanning segment. The Cytoplasmic segment spans residues L269–L337. The Dileucine internalization motif motif lies at L276 to I277.

The protein belongs to the type II cytokine receptor family. As to quaternary structure, heterodimer with IFNGR1, to form the IFNG receptor complex. Interacts (via intracellular domain) with JAK2. In terms of tissue distribution, expressed in T-cells (at protein level).

It is found in the cell membrane. Its subcellular location is the cytoplasmic vesicle membrane. The protein resides in the golgi apparatus membrane. The protein localises to the endoplasmic reticulum membrane. It localises to the cytoplasm. Its function is as follows. Associates with IFNGR1 to form a receptor for the cytokine interferon gamma (IFNG). Ligand binding stimulates activation of the JAK/STAT signaling pathway. Required for signal transduction in contrast to other receptor subunit responsible for ligand binding. This chain is Interferon gamma receptor 2, found in Homo sapiens (Human).